The sequence spans 328 residues: Homeobox protein Hox-D1 (328 aa).

Residues 204–209 (TFEWMK) carry the Antp-type hexapeptide motif. Positions 229-288 (SSAIRTNFSTKQLTELEKEFHFNKYLTRARRIEIANCLHLNDTQVKIWFQNRRMKQKKRE) form a DNA-binding region, homeobox. The tract at residues 305–328 (PLSGTTPTKFIKNPGSPSQSQEPS) is disordered. The segment covering 319–328 (GSPSQSQEPS) has biased composition (polar residues).

The protein belongs to the Antp homeobox family. Labial subfamily.

The protein resides in the nucleus. Functionally, sequence-specific transcription factor which is part of a developmental regulatory system that provides cells with specific positional identities on the anterior-posterior axis. Acts on the anterior body structures. This Homo sapiens (Human) protein is Homeobox protein Hox-D1 (HOXD1).